A 976-amino-acid polypeptide reads, in one-letter code: Chitin synthase 3A (976 aa).

Positions 29-72 (DDANASNRSPVSNPYEPDYDQLSPPPMLGAQRPVPEQNESSRDL) are disordered. Residues 31 to 40 (ANASNRSPVS) show a composition bias toward polar residues. 4 N-linked (GlcNAc...) asparagine glycosylation sites follow: Asn32, Asn66, Asn95, and Asn602. The next 7 helical transmembrane spans lie at 639–659 (LLNV…TTII), 684–704 (IVNV…FVLA), 717–737 (VLSF…TGYL), 773–793 (LIII…FLYL), 801–821 (SFPQ…VYAF), 903–923 (TGLV…VTTD), and 944–964 (FLLY…LWFI).

Belongs to the chitin synthase family. Class III subfamily.

It is found in the cell membrane. The catalysed reaction is [(1-&gt;4)-N-acetyl-beta-D-glucosaminyl](n) + UDP-N-acetyl-alpha-D-glucosamine = [(1-&gt;4)-N-acetyl-beta-D-glucosaminyl](n+1) + UDP + H(+). In terms of biological role, polymerizes chitin, a structural polymer of the cell wall and septum, by transferring the sugar moiety of UDP-GlcNAc to the non-reducing end of the growing chitin polymer. Shows additive effects in septum formation with CHS1, CHS2, CHS4, CHS5, CHS6 and CHS7. Involved in virulence and mediates mycotoxin deoxinivalenol (DON) biosynthesis via the regulation of the expression of TRI4, TRI5 and TRI6. The polypeptide is Chitin synthase 3A (Gibberella zeae (strain ATCC MYA-4620 / CBS 123657 / FGSC 9075 / NRRL 31084 / PH-1) (Wheat head blight fungus)).